Here is a 264-residue protein sequence, read N- to C-terminus: Thiazole synthase (264 aa).

Residue lysine 101 is the Schiff-base intermediate with DXP of the active site. 1-deoxy-D-xylulose 5-phosphate-binding positions include glycine 162, 189 to 190 (AG), and 211 to 212 (NT). The segment at 245–264 (KRQTASPSTPTLGQPFWHNQ) is disordered.

This sequence belongs to the ThiG family. In terms of assembly, homotetramer. Forms heterodimers with either ThiH or ThiS.

The protein localises to the cytoplasm. The catalysed reaction is [ThiS sulfur-carrier protein]-C-terminal-Gly-aminoethanethioate + 2-iminoacetate + 1-deoxy-D-xylulose 5-phosphate = [ThiS sulfur-carrier protein]-C-terminal Gly-Gly + 2-[(2R,5Z)-2-carboxy-4-methylthiazol-5(2H)-ylidene]ethyl phosphate + 2 H2O + H(+). It functions in the pathway cofactor biosynthesis; thiamine diphosphate biosynthesis. Catalyzes the rearrangement of 1-deoxy-D-xylulose 5-phosphate (DXP) to produce the thiazole phosphate moiety of thiamine. Sulfur is provided by the thiocarboxylate moiety of the carrier protein ThiS. In vitro, sulfur can be provided by H(2)S. The polypeptide is Thiazole synthase (Cellvibrio japonicus (strain Ueda107) (Pseudomonas fluorescens subsp. cellulosa)).